Here is a 508-residue protein sequence, read N- to C-terminus: MATDWLGSIVSINCGDSLGVYQGRVSAVDQVSQTISLTRPFHNGVKCLVPEVTFRAGDITELKILEIPGPGDNQHFGDLHQTELGPSGAGCQVGINQNGTGKLVKKPASSSSAPQNIPKRTDVKSQDVAVSPQQQQCSKSYVDRHMESLSQSKSFRRRHNSWSSSSRHPNQATPKKSGLKNGQMKNKDDECFGDDIEEIPDTDFDFEGNLALFDKAAVFEEIDTYERRSGTRSRGIPNERPTRYRHDENILESEPIVYRRITVPHNVSKEFCTDSGLVVPSISYELHKKLLSVAEKHGLTLERRLEMTGVCASQMALTLLGGPNRLNPKNVHQRPTVALLCGPHVKGAQGIRCGRHLANHDVQVILFLPNFVKMLESITNELSLFSKTQGQQVSSLKDLPTSPVDLVINCLDCPENVFLRDQPWYKAAVAWANQNRAPVLSIDPPVHEVEQGIDAKWSLALGLPLPLGEHAGRIYLCDIGIPQQVFQEVGINYHSPFGCKFVIPLHSA.

Residues 1–68 (MATDWLGSIV…ITELKILEIP (68 aa)) enclose the Sm domain. Positions 1 to 79 (MATDWLGSIV…PGDNQHFGDL (79 aa)) are required for P-body targeting and interaction with DCP1A. The tract at residues 89 to 192 (AGCQVGINQN…QMKNKDDECF (104 aa)) is disordered. Residues Ser131, Ser138, Ser140, and Ser161 each carry the phosphoserine modification. The required for interaction with DDX6 stretch occupies residues 191-296 (CFGDDIEEIP…HKKLLSVAEK (106 aa)). Positions 192 to 228 (FGDDIEEIPDTDFDFEGNLALFDKAAVFEEIDTYERR) constitute a DFDF domain. The YjeF N-terminal domain maps to 283 to 487 (SYELHKKLLS…DIGIPQQVFQ (205 aa)).

The protein belongs to the EDC3 family. In terms of assembly, homodimer (via YjeF N-terminal domain). Forms a complex with DCP1A, DCP2, DDX6 and EDC4/HEDLS, within this complex directly interacts with DCP1A and DDX6. Interacts with ZFP36.

It localises to the cytoplasm. The protein resides in the P-body. Binds single-stranded RNA. Involved in the process of mRNA degradation and in the positive regulation of mRNA decapping. This is Enhancer of mRNA-decapping protein 3 (EDC3) from Pongo abelii (Sumatran orangutan).